The sequence spans 697 residues: Elongation factor G (697 aa).

The tr-type G domain maps to 10 to 285 (ERTRNIGIMA…AVVDYLPSPL (276 aa)). Residues 19–26 (AHIDAGKT), 83–87 (DTPGH), and 137–140 (NKMD) each bind GTP.

Belongs to the TRAFAC class translation factor GTPase superfamily. Classic translation factor GTPase family. EF-G/EF-2 subfamily.

The protein resides in the cytoplasm. Functionally, catalyzes the GTP-dependent ribosomal translocation step during translation elongation. During this step, the ribosome changes from the pre-translocational (PRE) to the post-translocational (POST) state as the newly formed A-site-bound peptidyl-tRNA and P-site-bound deacylated tRNA move to the P and E sites, respectively. Catalyzes the coordinated movement of the two tRNA molecules, the mRNA and conformational changes in the ribosome. The sequence is that of Elongation factor G from Pediococcus pentosaceus (strain ATCC 25745 / CCUG 21536 / LMG 10740 / 183-1w).